A 306-amino-acid chain; its full sequence is MKNKRMLKIGMCVGILGLSVTSLEAFTGGALQVEAKEKTGQVKHKNQATHKEFSQLEKKFDARLGVYAIDTGTNQTISYRHNERFAFASTYKALAAGVLLQQNSIDTLNEVIKFTKEDLVDYSPVTEKHVDTGMKLGEIAEAAVRSSDNTAGNILFHKIGGPKGYEKALRQIGDRVTMSDRFETELNEAIPGDIRDTSTAKAIASNLKAFTVGNALPAEKRKILTEWMKGNATGDKLIRAGVPTDWIVGDKSGAGSYGTRNDIAIVWPPNRAPIIIAILSSKDEKEATYDNQLIAEAPEVIVKSLK.

The N-terminal stretch at M1–K43 is a signal peptide. S89 acts as the Acyl-ester intermediate in catalysis. The Proton acceptor role is filled by E185. Residue K251–G253 coordinates substrate.

Belongs to the class-A beta-lactamase family.

It catalyses the reaction a beta-lactam + H2O = a substituted beta-amino acid. Functionally, this protein is a beta-lactamase with a substrate specificity for penicillins. This chain is Beta-lactamase 1 (blaCI), found in Bacillus mycoides.